Consider the following 260-residue polypeptide: MAIITMKSLLEAGVHFGHQVKRLDPRMKRFIFSERNEIHILDLQKTLQGIKDSYELVQRVIKDGKKVLFVGTKKQASEIIEQEARRSDMPYVNNRWLGGMLSNFNTIRKSVQKLKKLEKMEVDGTFDMISKKEISQLNREKSKLAKNLTGIKDMETLPGAIFIIDPKREQIAINEARKLKIPIISVVDTNCNPDVIDCPIPGNDDAIRSVALFTKIISDAILESDKEVGIQIIENLNEEDLMKEIEIKNDKSDSIEERGE.

Belongs to the universal ribosomal protein uS2 family.

This chain is Small ribosomal subunit protein uS2 (rpsB), found in Borreliella burgdorferi (strain ATCC 35210 / DSM 4680 / CIP 102532 / B31) (Borrelia burgdorferi).